The chain runs to 613 residues: Dihydroxy-acid dehydratase (613 aa).

A Mg(2+)-binding site is contributed by Asp-81. Cys-122 provides a ligand contact to [2Fe-2S] cluster. Asp-123 and Lys-124 together coordinate Mg(2+). N6-carboxylysine is present on Lys-124. [2Fe-2S] cluster is bound at residue Cys-195. Glu-491 contacts Mg(2+). Catalysis depends on Ser-517, which acts as the Proton acceptor.

The protein belongs to the IlvD/Edd family. As to quaternary structure, homodimer. [2Fe-2S] cluster serves as cofactor. The cofactor is Mg(2+).

It carries out the reaction (2R)-2,3-dihydroxy-3-methylbutanoate = 3-methyl-2-oxobutanoate + H2O. The catalysed reaction is (2R,3R)-2,3-dihydroxy-3-methylpentanoate = (S)-3-methyl-2-oxopentanoate + H2O. It participates in amino-acid biosynthesis; L-isoleucine biosynthesis; L-isoleucine from 2-oxobutanoate: step 3/4. It functions in the pathway amino-acid biosynthesis; L-valine biosynthesis; L-valine from pyruvate: step 3/4. In terms of biological role, functions in the biosynthesis of branched-chain amino acids. Catalyzes the dehydration of (2R,3R)-2,3-dihydroxy-3-methylpentanoate (2,3-dihydroxy-3-methylvalerate) into 2-oxo-3-methylpentanoate (2-oxo-3-methylvalerate) and of (2R)-2,3-dihydroxy-3-methylbutanoate (2,3-dihydroxyisovalerate) into 2-oxo-3-methylbutanoate (2-oxoisovalerate), the penultimate precursor to L-isoleucine and L-valine, respectively. The chain is Dihydroxy-acid dehydratase from Aliivibrio fischeri (strain ATCC 700601 / ES114) (Vibrio fischeri).